A 207-amino-acid chain; its full sequence is Putative tributyltin chloride resistance protein (207 aa).

A slt-type domain region spans residues N37 to G122. E49 is a catalytic residue.

This sequence belongs to the transglycosylase Slt family.

This chain is Putative tributyltin chloride resistance protein (tbtA), found in Alteromonas sp. (strain M-1).